A 149-amino-acid polypeptide reads, in one-letter code: Ribose-5-phosphate isomerase B (149 aa).

D-ribulose 5-phosphate is bound at residue 9 to 10 (DH). Cys-66 (proton acceptor) is an active-site residue. Position 67 to 71 (67 to 71 (GTGVG)) interacts with D-ribulose 5-phosphate. The active-site Proton donor is His-99. D-ribulose 5-phosphate-binding residues include Asn-100, Arg-110, Arg-133, and Arg-137.

Belongs to the LacAB/RpiB family. As to quaternary structure, homodimer, and homotetramer.

It carries out the reaction aldehydo-D-ribose 5-phosphate = D-ribulose 5-phosphate. It catalyses the reaction D-allose 6-phosphate = D-allulose 6-phosphate. It participates in carbohydrate degradation; pentose phosphate pathway; D-ribose 5-phosphate from D-ribulose 5-phosphate (non-oxidative stage): step 1/1. Its activity is regulated as follows. Inhibited by iodoacetate and glucose 6-phosphate. Its function is as follows. Catalyzes the interconversion of ribulose-5-P and ribose-5-P. It probably also has activity on D-allose 6-phosphate. This chain is Ribose-5-phosphate isomerase B, found in Escherichia coli (strain K12).